A 474-amino-acid polypeptide reads, in one-letter code: Cytochrome c biogenesis protein CcsB (474 aa).

3 consecutive transmembrane segments (helical) span residues 36-56 (LKLA…GTVI), 96-116 (SWWF…CTFR), and 182-202 (VGPI…MIGA).

This sequence belongs to the Ccs1/CcsB family. May interact with CcsA.

It localises to the cell inner membrane. In terms of biological role, required during biogenesis of c-type cytochromes (cytochrome c6 and cytochrome f) at the step of heme attachment. The protein is Cytochrome c biogenesis protein CcsB of Gloeobacter violaceus (strain ATCC 29082 / PCC 7421).